Here is a 316-residue protein sequence, read N- to C-terminus: MHQSEFDPHSKEVVARAPLDPHLKALENEAIHIFREVAGEFDNPVMLYSIGKDSSVLLHLARKAFYPGRVPFPLLHIDTGWKFKEMIAFRDEMAKRYDLDLVVHTNPRGKTEGVTPFSHGSALYTDIMKTEALRQALDAGKYDAAFGGARRDEEASRAKERIYSFRTPDHKWDPRNQRPELWNVYNGMIRRGESVRAFPLSNWTEVDIWRYIQAENIPLVPLYFAEKRPFIERDGMMILAEDERLELLPGEKVQHGSIRFRTLGCFPLTGALRSEARTLDDVIAELEIATVSERQGRAIDRDQSGSMEKKKREGYF.

The interval 297–316 (RAIDRDQSGSMEKKKREGYF) is disordered.

This sequence belongs to the PAPS reductase family. CysD subfamily. In terms of assembly, heterodimer composed of CysD, the smaller subunit, and CysN.

The enzyme catalyses sulfate + ATP + H(+) = adenosine 5'-phosphosulfate + diphosphate. The protein operates within sulfur metabolism; hydrogen sulfide biosynthesis; sulfite from sulfate: step 1/3. In terms of biological role, with CysN forms the ATP sulfurylase (ATPS) that catalyzes the adenylation of sulfate producing adenosine 5'-phosphosulfate (APS) and diphosphate, the first enzymatic step in sulfur assimilation pathway. APS synthesis involves the formation of a high-energy phosphoric-sulfuric acid anhydride bond driven by GTP hydrolysis by CysN coupled to ATP hydrolysis by CysD. This is Sulfate adenylyltransferase subunit 2 from Allorhizobium ampelinum (strain ATCC BAA-846 / DSM 112012 / S4) (Agrobacterium vitis (strain S4)).